We begin with the raw amino-acid sequence, 342 residues long: Nicotinate-nucleotide--dimethylbenzimidazole phosphoribosyltransferase (342 aa).

Glu311 serves as the catalytic Proton acceptor.

The protein belongs to the CobT family.

It carries out the reaction 5,6-dimethylbenzimidazole + nicotinate beta-D-ribonucleotide = alpha-ribazole 5'-phosphate + nicotinate + H(+). It participates in nucleoside biosynthesis; alpha-ribazole biosynthesis; alpha-ribazole from 5,6-dimethylbenzimidazole: step 1/2. Functionally, catalyzes the synthesis of alpha-ribazole-5'-phosphate from nicotinate mononucleotide (NAMN) and 5,6-dimethylbenzimidazole (DMB). This Vibrio vulnificus (strain CMCP6) protein is Nicotinate-nucleotide--dimethylbenzimidazole phosphoribosyltransferase.